The following is a 403-amino-acid chain: Putative F-box protein At5g41500 (403 aa).

Positions Ala-2–Met-47 constitute an F-box domain.

This Arabidopsis thaliana (Mouse-ear cress) protein is Putative F-box protein At5g41500.